The sequence spans 123 residues: uncharacterized protein (123 aa).

3 helical membrane-spanning segments follow: residues V7–V29, F44–I66, and L79–A101.

Its subcellular location is the cell membrane. This is an uncharacterized protein from Bacillus subtilis (strain 168).